We begin with the raw amino-acid sequence, 587 residues long: Trans-activating transcriptional regulatory protein (587 aa).

This sequence belongs to the nucleopolyhedrovirus IE-1 protein family.

In terms of biological role, regulatory transcriptional protein, which trans-activates gene expression from early baculovirus promoters. Can also trans-activate its own promoter, suggesting that it is autoregulated during normal infection of insect cells. The protein is Trans-activating transcriptional regulatory protein (IE1) of Bombyx mori nuclear polyhedrosis virus (BmNPV).